The sequence spans 116 residues: ANPSYAVVGHYTQIVWYKSDRIGCAAAYCPSSVYNYFYVCQYCPAGNFAGRTATPYKSGPPCGDCPSACDNGLCTNPCRVEDEFINCKDMAESRDCQDNYMMTNCAAFCSCHNEII.

The SCP domain occupies Ser-4–Tyr-42. Intrachain disulfides connect Cys-24–Cys-40, Cys-62–Cys-69, Cys-65–Cys-74, Cys-87–Cys-105, and Cys-96–Cys-109. Residues Cys-78–Cys-111 enclose the ShKT domain.

This sequence belongs to the CRISP family. Expressed by the venom gland.

It is found in the secreted. In terms of biological role, blocks contraction of smooth muscle elicited by high potassium-induced depolarization, but does not block caffeine-stimulated contraction. May target voltage-gated calcium channels on smooth muscle. The protein is Cysteine-rich venom protein Cau1 of Causus rhombeatus (Rhombic night adder).